The primary structure comprises 428 residues: D-amino acid dehydrogenase (428 aa).

3-17 is a binding site for FAD; that stretch reads VVILGSGVVGVASAY.

The protein belongs to the DadA oxidoreductase family. The cofactor is FAD.

It carries out the reaction a D-alpha-amino acid + A + H2O = a 2-oxocarboxylate + AH2 + NH4(+). It functions in the pathway amino-acid degradation; D-alanine degradation; NH(3) and pyruvate from D-alanine: step 1/1. Oxidative deamination of D-amino acids. This chain is D-amino acid dehydrogenase, found in Burkholderia thailandensis (strain ATCC 700388 / DSM 13276 / CCUG 48851 / CIP 106301 / E264).